The sequence spans 407 residues: Na(+)-translocating NADH-quinone reductase subunit F (407 aa).

A helical membrane pass occupies residues 3 to 23; sequence IILGVVMFTLIVLALVLVILF. The region spanning 32 to 126 is the 2Fe-2S ferredoxin-type domain; it reads GDITISINGD…DMDIELPEEI (95 aa). The [2Fe-2S] cluster site is built by Cys-69, Cys-75, Cys-78, and Cys-110. The FAD-binding FR-type domain maps to 129–269; the sequence is VKKWECTVIS…SGPFGEFFAK (141 aa). The catalytic stretch occupies residues 272 to 389; that stretch reads DAEMVFIGGG…PMMNAAVIGM (118 aa).

It belongs to the NqrF family. Composed of six subunits; NqrA, NqrB, NqrC, NqrD, NqrE and NqrF. It depends on [2Fe-2S] cluster as a cofactor. The cofactor is FAD.

It is found in the cell inner membrane. The enzyme catalyses a ubiquinone + n Na(+)(in) + NADH + H(+) = a ubiquinol + n Na(+)(out) + NAD(+). Its function is as follows. NQR complex catalyzes the reduction of ubiquinone-1 to ubiquinol by two successive reactions, coupled with the transport of Na(+) ions from the cytoplasm to the periplasm. The first step is catalyzed by NqrF, which accepts electrons from NADH and reduces ubiquinone-1 to ubisemiquinone by a one-electron transfer pathway. This Vibrio vulnificus (strain CMCP6) protein is Na(+)-translocating NADH-quinone reductase subunit F.